The primary structure comprises 242 residues: Ribonuclease 3 (242 aa).

An RNase III domain is found at Leu-14–Gly-142. Glu-56 provides a ligand contact to Mg(2+). Asp-60 is an active-site residue. 2 residues coordinate Mg(2+): Asp-128 and Glu-131. Glu-131 is an active-site residue. The 66-residue stretch at Asn-170–Ser-235 folds into the DRBM domain.

Belongs to the ribonuclease III family. In terms of assembly, homodimer. Requires Mg(2+) as cofactor.

Its subcellular location is the cytoplasm. It catalyses the reaction Endonucleolytic cleavage to 5'-phosphomonoester.. Functionally, digests double-stranded RNA. Involved in the processing of primary rRNA transcript to yield the immediate precursors to the large and small rRNAs (23S and 16S). Processes some mRNAs, and tRNAs when they are encoded in the rRNA operon. Processes pre-crRNA and tracrRNA of type II CRISPR loci if present in the organism. The polypeptide is Ribonuclease 3 (Gloeobacter violaceus (strain ATCC 29082 / PCC 7421)).